The sequence spans 472 residues: Probable dipeptidase A (472 aa).

Cys10 is a catalytic residue.

Belongs to the peptidase C69 family.

It catalyses the reaction an L-aminoacyl-L-amino acid + H2O = 2 an L-alpha-amino acid. In Streptococcus pyogenes serotype M18 (strain MGAS8232), this protein is Probable dipeptidase A (pepDA).